We begin with the raw amino-acid sequence, 249 residues long: uncharacterized protein (249 aa).

This is an uncharacterized protein from Caenorhabditis elegans.